Consider the following 204-residue polypeptide: LexA repressor (204 aa).

A DNA-binding region (H-T-H motif) is located at residues 28-48 (VREIGQAVGLASSSTVHGHLS). Residues serine 126 and lysine 164 each act as for autocatalytic cleavage activity in the active site.

The protein belongs to the peptidase S24 family. In terms of assembly, homodimer.

The catalysed reaction is Hydrolysis of Ala-|-Gly bond in repressor LexA.. Functionally, represses a number of genes involved in the response to DNA damage (SOS response), including recA and lexA. In the presence of single-stranded DNA, RecA interacts with LexA causing an autocatalytic cleavage which disrupts the DNA-binding part of LexA, leading to derepression of the SOS regulon and eventually DNA repair. The sequence is that of LexA repressor from Bacillus mycoides (strain KBAB4) (Bacillus weihenstephanensis).